An 80-amino-acid polypeptide reads, in one-letter code: MPKKNEAPASFETALSELEHIVTRLESGDLPLEDALNEFERGVQLARQGQAKLQQAEQRVQILLSDNEEASPEPFIADNE.

Belongs to the XseB family. As to quaternary structure, heterooligomer composed of large and small subunits.

The protein localises to the cytoplasm. The enzyme catalyses Exonucleolytic cleavage in either 5'- to 3'- or 3'- to 5'-direction to yield nucleoside 5'-phosphates.. Bidirectionally degrades single-stranded DNA into large acid-insoluble oligonucleotides, which are then degraded further into small acid-soluble oligonucleotides. In Salmonella paratyphi B (strain ATCC BAA-1250 / SPB7), this protein is Exodeoxyribonuclease 7 small subunit.